Consider the following 1035-residue polypeptide: Calcium-transporting ATPase 7, plasma membrane-type (1035 aa).

The Cytoplasmic segment spans residues 1 to 166 (MECADYFIGS…KGFFRHVWDA (166 aa)). The chain crosses the membrane as a helical span at residues 167–187 (LADVFLIVLLVCAAVSLAFGI). The Extracellular portion of the chain corresponds to 188–194 (KEHGIKD). Residues 195–215 (GWYDGVSIFLAVFLVAAVSAV) traverse the membrane as a helical segment. At 216–348 (SNHSQGKRFD…DPTPLQERLE (133 aa)) the chain is on the cytoplasmic side. Residues 349-369 (GLTSSIGKVGIAVAVLVFAVL) form a helical membrane-spanning segment. Residues 370 to 395 (TARHFTGSTRDEQGNALFDKRNVTFN) are Extracellular-facing. N-linked (GlcNAc...) asparagine glycosylation is present at asparagine 391. Residues 396–416 (AVFSGLVGIFQQAVTIIVVAI) traverse the membrane as a helical segment. The Cytoplasmic segment spans residues 417–818 (PEGLPLAVTL…GRCVYNNIQK (402 aa)). The 4-aspartylphosphate intermediate role is filled by aspartate 460. Mg(2+)-binding residues include aspartate 761 and aspartate 765. Residues 819–839 (FIQFQLTVNVAALVINFVSAV) traverse the membrane as a helical segment. Over 840–845 (TTGRMP) the chain is Extracellular. A helical membrane pass occupies residues 846 to 866 (LTTVQLLWVNLIMDTMGALAL). The Cytoplasmic portion of the chain corresponds to 867-887 (ATDTPTAGLMRRPPIGRAAPL). A helical membrane pass occupies residues 888–910 (ISNAMWRNLAAQAAYQVAVLLAL). Residues 911 to 919 (QYRGFGGAG) lie on the Extracellular side of the membrane. A helical transmembrane segment spans residues 920-940 (AGERANGTMIFNAFVLCQVFN). At 941-960 (EFNAREIERRNVFAGVHRNR) the chain is on the cytoplasmic side. A helical transmembrane segment spans residues 961 to 981 (MFLGIVAVTVALQVVMVELLT). Residues 982–990 (KFAGTERLG) are Extracellular-facing. The helical transmembrane segment at 991-1011 (WGQWGACVGIAAVSWPIGWAV) threads the bilayer. Residues 1012-1035 (KCIPVPERPFHEIITARRRRRRST) lie on the Cytoplasmic side of the membrane.

This sequence belongs to the cation transport ATPase (P-type) (TC 3.A.3) family. Type IIB subfamily.

The protein localises to the golgi apparatus membrane. It carries out the reaction Ca(2+)(in) + ATP + H2O = Ca(2+)(out) + ADP + phosphate + H(+). With respect to regulation, activated by calmodulin. In terms of biological role, this magnesium-dependent enzyme catalyzes the hydrolysis of ATP coupled with the translocation of calcium from the cytosol out of the cell, into the endoplasmic reticulum, or into organelles. Involved in salt stress tolerance. This is Calcium-transporting ATPase 7, plasma membrane-type from Oryza sativa subsp. japonica (Rice).